The sequence spans 316 residues: ATP synthase gamma chain (316 aa).

Belongs to the ATPase gamma chain family. As to quaternary structure, F-type ATPases have 2 components, CF(1) - the catalytic core - and CF(0) - the membrane proton channel. CF(1) has five subunits: alpha(3), beta(3), gamma(1), delta(1), epsilon(1). CF(0) has three main subunits: a, b and c.

The protein resides in the cellular thylakoid membrane. Functionally, produces ATP from ADP in the presence of a proton gradient across the membrane. The gamma chain is believed to be important in regulating ATPase activity and the flow of protons through the CF(0) complex. The chain is ATP synthase gamma chain from Prochlorococcus marinus (strain NATL1A).